The sequence spans 429 residues: Adenylosuccinate synthetase (429 aa).

GTP-binding positions include glycine 13–lysine 19 and glycine 41–threonine 43. Aspartate 14 serves as the catalytic Proton acceptor. Residues aspartate 14 and glycine 41 each coordinate Mg(2+). Residues aspartate 14–lysine 17, asparagine 39–histidine 42, threonine 130, arginine 144, glutamine 225, threonine 240, and arginine 304 contribute to the IMP site. Histidine 42 (proton donor) is an active-site residue. Alanine 300–arginine 306 serves as a coordination point for substrate. GTP-binding positions include arginine 306, lysine 332 to aspartate 334, and serine 413 to glycine 415.

It belongs to the adenylosuccinate synthetase family. Homodimer. Mg(2+) is required as a cofactor.

It is found in the cytoplasm. It carries out the reaction IMP + L-aspartate + GTP = N(6)-(1,2-dicarboxyethyl)-AMP + GDP + phosphate + 2 H(+). The protein operates within purine metabolism; AMP biosynthesis via de novo pathway; AMP from IMP: step 1/2. Plays an important role in the de novo pathway of purine nucleotide biosynthesis. Catalyzes the first committed step in the biosynthesis of AMP from IMP. The chain is Adenylosuccinate synthetase from Pseudomonas fluorescens (strain Pf0-1).